We begin with the raw amino-acid sequence, 90 residues long: Small ribosomal subunit protein uS15c (90 aa).

As to quaternary structure, component of the chloroplast small ribosomal subunit (SSU). Mature 70S chloroplast ribosomes of higher plants consist of a small (30S) and a large (50S) subunit. The 30S small subunit contains 1 molecule of ribosomal RNA (16S rRNA) and 24 different proteins. The 50S large subunit contains 3 rRNA molecules (23S, 5S and 4.5S rRNA) and 33 different proteins.

The protein localises to the plastid. It is found in the chloroplast. Component of the chloroplast ribosome (chloro-ribosome), a dedicated translation machinery responsible for the synthesis of chloroplast genome-encoded proteins, including proteins of the transcription and translation machinery and components of the photosynthetic apparatus. This is Small ribosomal subunit protein uS15c (rps15) from Spinacia oleracea (Spinach).